An 823-amino-acid chain; its full sequence is Translation initiation factor IF-2 (823 aa).

2 disordered regions span residues 30–66 (VPPS…DDKR) and 156–192 (TPSH…IKKV). The span at 36-48 (RGTSTGKSFTTVE) shows a compositional bias: polar residues. Residues 56 to 66 (PGEYISHDDKR) show a composition bias toward basic and acidic residues. Residues 322 to 491 (PRPPVVTVMG…LLLAEMLELS (170 aa)) enclose the tr-type G domain. Residues 331–338 (GHVDHGKT) are G1. 331-338 (GHVDHGKT) provides a ligand contact to GTP. Positions 356 to 360 (GITQH) are G2. A G3 region spans residues 377 to 380 (DTPG). Residues 377 to 381 (DTPGH) and 431 to 434 (NKID) contribute to the GTP site. The segment at 431-434 (NKID) is G4. Positions 467 to 469 (SAK) are G5.

It belongs to the TRAFAC class translation factor GTPase superfamily. Classic translation factor GTPase family. IF-2 subfamily.

Its subcellular location is the cytoplasm. One of the essential components for the initiation of protein synthesis. Protects formylmethionyl-tRNA from spontaneous hydrolysis and promotes its binding to the 30S ribosomal subunits. Also involved in the hydrolysis of GTP during the formation of the 70S ribosomal complex. The protein is Translation initiation factor IF-2 of Anaplasma phagocytophilum (strain HZ).